Here is a 482-residue protein sequence, read N- to C-terminus: Proline--tRNA ligase (482 aa).

T117, E119, and R148 together coordinate L-proline. Residues R148, E150, Q232, and T235 each contribute to the ATP site. H237 provides a ligand contact to L-proline. S269 provides a ligand contact to ATP. The interval 346 to 376 (EMRGVPLRVEIGPRDLEKGAAVISRRDTGEK) is interaction with tRNA. Residues C436, C441, C464, and C467 each contribute to the Zn(2+) site.

The protein belongs to the class-II aminoacyl-tRNA synthetase family. ProS type 3 subfamily. In terms of assembly, homodimer. The dimer is functionally asymmetric: only one of the two active sites at a time is able to form prolyl-adenylate, and only one tRNA molecule binds per dimer. Interacts with LeuRS, which enhances tRNA(Pro) aminoacylation.

The protein resides in the cytoplasm. It carries out the reaction tRNA(Pro) + L-proline + ATP = L-prolyl-tRNA(Pro) + AMP + diphosphate. Catalyzes the attachment of proline to tRNA(Pro) in a two-step reaction: proline is first activated by ATP to form Pro-AMP and then transferred to the acceptor end of tRNA(Pro). Can inadvertently accommodate and process cysteine. The sequence is that of Proline--tRNA ligase (proS) from Methanothermobacter thermautotrophicus (strain ATCC 29096 / DSM 1053 / JCM 10044 / NBRC 100330 / Delta H) (Methanobacterium thermoautotrophicum).